A 39-amino-acid polypeptide reads, in one-letter code: Natriuretic peptide PaNP-d (39 aa).

Residues 1-8 (SGSKTAEI) constitute a propeptide that is removed on maturation. The segment at 1–39 (SGSKTAEIDDGCFGLPLDPIGSTSGMGCRSVPKPIPGGS) is disordered. Cysteines 12 and 28 form a disulfide.

Belongs to the natriuretic peptide family. In terms of tissue distribution, expressed by the venom gland.

It is found in the secreted. In terms of biological role, snake venom natriuretic peptide that targets both NPR1 and NPR2. Exhibits hypotensive and vasodepressor activities. This chain is Natriuretic peptide PaNP-d, found in Pseudechis australis (Mulga snake).